The following is a 342-amino-acid chain: Phenylalanine--tRNA ligase alpha subunit (342 aa).

Mg(2+) is bound at residue E260.

Belongs to the class-II aminoacyl-tRNA synthetase family. Phe-tRNA synthetase alpha subunit type 1 subfamily. Tetramer of two alpha and two beta subunits. Requires Mg(2+) as cofactor.

It is found in the cytoplasm. It catalyses the reaction tRNA(Phe) + L-phenylalanine + ATP = L-phenylalanyl-tRNA(Phe) + AMP + diphosphate + H(+). This Mycobacterium avium (strain 104) protein is Phenylalanine--tRNA ligase alpha subunit.